The chain runs to 1313 residues: Angiotensin-converting enzyme (1313 aa).

Positions 1-35 are cleaved as a signal peptide; that stretch reads MGAASGQRGRWPLSPPLLMLSLLLLLLLPPSPAPA. Residues 36 to 1265 are Extracellular-facing; it reads LDPGLQPGNF…LEPQQARVGQ (1230 aa). Residues asparagine 44, asparagine 60, asparagine 80, asparagine 117, asparagine 152, and asparagine 166 are each glycosylated (N-linked (GlcNAc...) asparagine). Peptidase M2 domains are found at residues 46-630 and 649-1228; these read SADE…LGWP and ETDE…LGWP. The cysteines at positions 163 and 171 are disulfide-linked. Tyrosine 237 serves as a coordination point for chloride. N-linked (GlcNAc...) asparagine glycosylation is present at asparagine 324. An intrachain disulfide couples cysteine 365 to cysteine 383. Histidine 396 is a binding site for Zn(2+). Glutamate 397 functions as the Proton acceptor 1 in the catalytic mechanism. Zn(2+) is bound by residues histidine 400 and glutamate 424. Asparagine 515 is a glycosylation site (N-linked (GlcNAc...) asparagine). Histidine 526 functions as the Proton donor 1 in the catalytic mechanism. Arginine 535 contacts chloride. A disulfide bond links cysteine 551 and cysteine 563. N-linked (GlcNAc...) asparagine glycosylation is found at asparagine 683, asparagine 701, asparagine 720, and asparagine 766. Cysteine 763 and cysteine 769 form a disulfide bridge. Residues arginine 797 and tyrosine 835 each coordinate chloride. Asparagine 948 carries an N-linked (GlcNAc...) asparagine glycan. An intrachain disulfide couples cysteine 963 to cysteine 981. Position 994 (histidine 994) interacts with Zn(2+). The Proton acceptor 2 role is filled by glutamate 995. The Zn(2+) site is built by histidine 998 and glutamate 1022. Positions 1096 and 1100 each coordinate chloride. Catalysis depends on histidine 1124, which acts as the Proton donor 2. Residue arginine 1133 participates in chloride binding. A disulfide bridge connects residues cysteine 1149 and cysteine 1161. N-linked (GlcNAc...) asparagine glycosylation is present at asparagine 1197. The tract at residues 1221-1262 is juxtamembrane stalk; it reads HGETLGWPEYTWTPNTARAEGSLPESSRVNFLGMYLEPQQAR. Residues 1266 to 1282 form a helical membrane-spanning segment; sequence WVLLFLGVALLVATVGL. The Cytoplasmic segment spans residues 1283–1313; it reads AHRLYNIHNHHSLRRPHRGPQFGSEVELRHS. Serine 1306 carries the phosphoserine modification.

This sequence belongs to the peptidase M2 family. In terms of assembly, monomer and homodimer; homodimerizes following binding to an inhibitor. Interacts with calmodulin (CALM1, CALM2 or CALM3); interaction takes place in the cytoplasmic region and regulates phosphorylation and proteolytic cleavage. Zn(2+) serves as cofactor. It depends on chloride as a cofactor. Post-translationally, produced following proteolytic cleavage by secretase enzymes that cleave the transmembrane form in the juxtamembrane stalk region upstream of the transmembrane region. Cleavage can take place at different sites of the juxtamembrane stalk region. Phosphorylated by CK2 on Ser-1306; which allows membrane retention. Phosphorylated on tyrosine residues on its extracellular part, promoting cleavage by secretase enzymes and formation of the soluble form (Angiotensin-converting enzyme, soluble form). As to expression, expressed in brain, kidney, lung, skeletal muscle and heart. Testis-specific isoform is expressed in spermatocytes, adult testis.

It localises to the cell membrane. It is found in the cytoplasm. The protein resides in the secreted. The enzyme catalyses Release of a C-terminal dipeptide, oligopeptide-|-Xaa-Yaa, when Xaa is not Pro, and Yaa is neither Asp nor Glu. Thus, conversion of angiotensin I to angiotensin II, with increase in vasoconstrictor activity, but no action on angiotensin II.. It carries out the reaction angiotensin I + H2O = L-histidyl-L-leucine + angiotensin II. The catalysed reaction is bradykinin + H2O = L-Phe-L-Arg + bradykinin(1-7). It catalyses the reaction substance P + H2O = substance P(1-9) + L-Leu-L-Met-NH2. The enzyme catalyses substance P + H2O = substance P(1-8) + Gly-L-Leu-L-Met-NH2. It carries out the reaction substance P + H2O = L-Phe-L-Phe-Gly-L-Leu-L-Met-NH2 + substance P(1-6). The catalysed reaction is neurotensin + H2O = neurotensin(1-11) + L-isoleucyl-L-leucine. It catalyses the reaction goralatide + H2O = N-acetyl-L-seryl-L-aspartate + L-lysyl-L-proline. The enzyme catalyses Met-enkephalin + H2O = L-phenylalanyl-L-methionine + L-tyrosylglycylglycine. It carries out the reaction Leu-enkephalin + H2O = L-tyrosylglycylglycine + L-phenylalanyl-L-leucine. The catalysed reaction is Met-enkephalin-Arg-Phe + H2O = L-arginyl-L-phenylalanine + Met-enkephalin. Its activity is regulated as follows. The dipeptidyl carboxypeptidase activity is strongly activated by chloride. The dipeptidyl carboxypeptidase activity is specifically inhibited by lisinopril, captopril and enalaprilat. Strongly inhibited by lisinopril and captopril. Its function is as follows. Dipeptidyl carboxypeptidase that removes dipeptides from the C-terminus of a variety of circulating hormones, such as angiotensin I, bradykinin or enkephalins, thereby playing a key role in the regulation of blood pressure, electrolyte homeostasis or synaptic plasticity. Composed of two similar catalytic domains, each possessing a functional active site, with different selectivity for substrates. Plays a major role in the angiotensin-renin system that regulates blood pressure and sodium retention by the kidney by converting angiotensin I to angiotensin II, resulting in an increase of the vasoconstrictor activity of angiotensin. Also able to inactivate bradykinin, a potent vasodilator, and therefore enhance the blood pressure response. Acts as a regulator of synaptic transmission by mediating cleavage of neuropeptide hormones, such as substance P, neurotensin or enkephalins. Catalyzes degradation of different enkephalin neuropeptides (Met-enkephalin, Leu-enkephalin, Met-enkephalin-Arg-Phe and possibly Met-enkephalin-Arg-Gly-Leu). Acts as a regulator of synaptic plasticity in the nucleus accumbens of the brain by mediating cleavage of Met-enkephalin-Arg-Phe, a strong ligand of Mu-type opioid receptor OPRM1, into Met-enkephalin. Met-enkephalin-Arg-Phe cleavage by ACE decreases activation of OPRM1, leading to long-term synaptic potentiation of glutamate release. Also acts as a regulator of hematopoietic stem cell differentiation by mediating degradation of hemoregulatory peptide N-acetyl-SDKP (AcSDKP). Acts as a regulator of cannabinoid signaling pathway by mediating degradation of hemopressin, an antagonist peptide of the cannabinoid receptor CNR1. Involved in amyloid-beta metabolism by catalyzing degradation of Amyloid-beta protein 40 and Amyloid-beta protein 42 peptides, thereby preventing plaque formation. Catalyzes cleavage of cholecystokinin (maturation of Cholecystokinin-8 and Cholecystokinin-5) and Gonadoliberin-1 (both maturation and degradation) hormones. Degradation of hemoregulatory peptide N-acetyl-SDKP (AcSDKP) and amyloid-beta proteins is mediated by the N-terminal catalytic domain, while angiotensin I and cholecystokinin cleavage is mediated by the C-terminal catalytic region. In terms of biological role, soluble form that is released in blood plasma and other body fluids following proteolytic cleavage in the juxtamembrane stalk region. Isoform produced by alternative promoter usage that is specifically expressed in spermatocytes and adult testis, and which is required for male fertility. In contrast to somatic isoforms, only contains one catalytic domain. Acts as a dipeptidyl carboxypeptidase that removes dipeptides from the C-terminus of substrates. The identity of substrates that are needed for male fertility is unknown. May also have a glycosidase activity which releases GPI-anchored proteins from the membrane by cleaving the mannose linkage in the GPI moiety. The GPIase activity was reported to be essential for the egg-binding ability of the sperm. This activity is however unclear and has been challenged by other groups, suggesting that it may be indirect. This Rattus norvegicus (Rat) protein is Angiotensin-converting enzyme.